The primary structure comprises 293 residues: Urease accessory protein UreD (293 aa).

It belongs to the UreD family. UreD, UreF and UreG form a complex that acts as a GTP-hydrolysis-dependent molecular chaperone, activating the urease apoprotein by helping to assemble the nickel containing metallocenter of UreC. The UreE protein probably delivers the nickel.

It localises to the cytoplasm. Required for maturation of urease via the functional incorporation of the urease nickel metallocenter. The sequence is that of Urease accessory protein UreD from Cupriavidus metallidurans (strain ATCC 43123 / DSM 2839 / NBRC 102507 / CH34) (Ralstonia metallidurans).